Reading from the N-terminus, the 1078-residue chain is Extracellular calcium-sensing receptor (1078 aa).

Residues 1–19 (MAFYSCCWVLLALTWHTSA) form the signal peptide. Residues 20 to 610 (YGPDQRAQKK…KEIEFLSWTE (591 aa)) are Extracellular-facing. The tract at residues 22-188 (PDQRAQKKGD…QFKSFLRTIP (167 aa)) is ligand-binding 1 (LB1). The cysteines at positions 60 and 101 are disulfide-linked. 66–70 (RGFRW) serves as a coordination point for phosphate. Ca(2+) is bound by residues Ile-81, Ser-84, Leu-87, and Leu-88. A glycan (N-linked (GlcNAc...) asparagine) is linked at Asn-90. Position 100 (Thr-100) interacts with Ca(2+). The N-linked (GlcNAc...) asparagine glycan is linked to Asn-130. Thr-145 is a binding site for Ca(2+). L-tryptophan is bound by residues Ser-147, Ala-168, and Ser-170. Ca(2+)-binding residues include Ser-170, Pro-188, Asp-190, Glu-231, and Asp-234. The ligand-binding 2 (LB2) stretch occupies residues 189-324 (NDEHQATAMA…GGTIGFALKA (136 aa)). 7 cysteine pairs are disulfide-bonded: Cys-236/Cys-561, Cys-358/Cys-395, Cys-437/Cys-449, Cys-542/Cys-562, Cys-546/Cys-565, Cys-568/Cys-582, and Cys-585/Cys-598. Spermine is bound by residues Asp-238 and Ser-240. 2 N-linked (GlcNAc...) asparagine glycosylation sites follow: Asn-261 and Asn-287. Glu-297 provides a ligand contact to Ca(2+). Glu-297 contributes to the L-tryptophan binding site. 2 N-linked (GlcNAc...) asparagine glycosylation sites follow: Asn-386 and Asn-400. 415–417 (RIS) lines the phosphate pocket. N-linked (GlcNAc...) asparagine glycosylation is found at Asn-446, Asn-468, and Asn-488. Ca(2+) is bound at residue Tyr-489. N-linked (GlcNAc...) asparagine glycosylation occurs at Asn-541. The segment at 542–612 (CSRDCLAGTR…IEFLSWTEPF (71 aa)) is cysteine-rich (CR). A Ca(2+)-binding site is contributed by Gly-557. N-linked (GlcNAc...) asparagine glycosylation occurs at Asn-594. A helical transmembrane segment spans residues 611-636 (PFGIALTLFAVLGIFLTAFVLGVFIK). The Cytoplasmic segment spans residues 637 to 648 (FRNTPIVKATNR). The segment at 637–648 (FRNTPIVKATNR) is intracellular loop 1 (ICL1). Residues 649-668 (ELSYLLLFSLLCCFSSSLFF) traverse the membrane as a helical segment. The Extracellular portion of the chain corresponds to 669–674 (IGEPQD). The helical transmembrane segment at 675 to 698 (WTCRLRQPAFGISFVLCISCILVK) threads the bilayer. Topologically, residues 699–722 (TNRVLLVFEAKIPTSFHRKWWGLN) are cytoplasmic. Residues 699–722 (TNRVLLVFEAKIPTSFHRKWWGLN) form an intracellular loop 2 (ICL2) region. A helical transmembrane segment spans residues 723-745 (LQFLLVFLCTFMQIVICVIWLYT). Over 746-769 (APPSSYRNQELEDEIIFITCHEGS) the chain is Extracellular. The chain crosses the membrane as a helical span at residues 770–789 (LMALGFLIGYTCLLAAICFF). Residues 790–805 (FAFKSRKLPENFNEAK) lie on the Cytoplasmic side of the membrane. The segment at 790–805 (FAFKSRKLPENFNEAK) is intracellular loop 3 (ICL3). The chain crosses the membrane as a helical span at residues 806 to 828 (FITFSMLIFFIVWISFIPAYAST). Over 829–832 (YGKF) the chain is Extracellular. The helical transmembrane segment at 833–854 (VSAVEVIAILAASFGLLACIFF) threads the bilayer. The Cytoplasmic segment spans residues 855–1078 (NKIYIILFKP…STVTENVVNS (224 aa)). The interval 855 to 1078 (NKIYIILFKP…STVTENVVNS (224 aa)) is C-terminus. The segment at 880-900 (AFKVAARATLRRSNVSRKRSS) is interaction with RNF19A. Thr-888 carries the post-translational modification Phosphothreonine; by PKC. Residues 890-898 (RRSNVSRKR) form an arginine-rich retention motif region. Position 892 is a phosphoserine; by PKC (Ser-892). Disordered regions lie at residues 892-963 (SNVS…PRCK), 986-1006 (AMAH…SSDT), and 1030-1055 (TGLQ…PALV). Ser-899 is modified (phosphoserine; by PKA). Residues 900-918 (SSLGGSTGSTPSSSISSKS) show a composition bias toward low complexity. Ser-920 is modified (phosphoserine). Residues 932 to 960 (QQQPLALTQQEQQQQPLTLPQQQRSQQQP) show a composition bias toward low complexity. Positions 993–1006 (THQNSLEAQKSSDT) are enriched in polar residues. Residue Ser-1061 is modified to Phosphoserine.

It belongs to the G-protein coupled receptor 3 family. In terms of assembly, homodimer; disulfide-linked. Interacts with VCP. Interacts with ARRB1. In terms of processing, phosphorylation at Thr-888 by PKC impairs coupling with G(q)/G(11) G-proteins, while it does not affect G(i)/G(o)-coupling. Phosphorylation at Ser-892 by PKC and Ser-899 by PKA promote plasma membrane localization. Post-translationally, ubiquitinated by RNF19A; which induces proteasomal degradation. N-glycosylated. In terms of tissue distribution, expressed in the temporal lobe, frontal lobe, parietal lobe, hippocampus, and cerebellum. Also found in kidney, lung, liver, heart, skeletal muscle, placenta.

It is found in the cell membrane. With respect to regulation, in resting state, adopts an open conformation, anion-binding promoting the inactive configuration. Upon aromatic amino acid-binding, the groove in the extracellular venus flytrap module is closed, thereby inducing the formation of a novel homodimer interface between subunits. Calcium ions stabilize the active state by enhancing homodimer interactions between membrane-proximal domains to fully activate the receptor. Upon activation, the homodimer adopts an asymmetric configuration of the 7-transmembrane region that primes one protomer for G-protein coupling. G-protein binding expands the transmembrane dimer interface; the restriction imposed by the receptor dimer, in combination with intracellular loop 2 (ICL2), enables G-protein activation by facilitating conformational transition of G-protein alpha. Coupling to different classes of G-proteins results in distinct CASR-G-protein interfaces. Activated by glucose, which acts as a positive allosteric modulator. Activated by positive allosteric modulator drugs cinacalcet, evocalcet and etelcalcetide, which are clinically used for the treatment of hyperparathyroidism and familial hypocalciuric hypercalcemia. Inhibited by NPS-2143, a negative allosteric modulator tested for the treatment of hypocalcemia. Activated by velcalcetide (AMG 416), a D-amino acid-containing peptide agonist that is being evaluated for the treatment of secondary hyperparathyroidism in chronic kidney disease patients receiving hemodialysis. Velcalcetide agonist acts by forming a disulfide bond with Cys-482. In terms of biological role, G-protein-coupled receptor that senses changes in the extracellular concentration of calcium ions and plays a key role in maintaining calcium homeostasis. Senses fluctuations in the circulating calcium concentration: activated by elevated circulating calcium, leading to decreased parathyroid hormone (PTH) secretion in parathyroid glands. In kidneys, acts as a key regulator of renal tubular calcium resorption. Ligand binding causes a conformation change that triggers signaling via guanine nucleotide-binding proteins (G-proteins) and modulates the activity of downstream effectors. CASR is coupled with different G(q)/G(11), G(i)/G(o)- or G(s)-classes of G-proteins depending on the context. In the parathyroid and kidney, CASR signals through G(q)/G(11) and G(i)/G(o) G-proteins: G(q)/G(11) coupling activates phospholipase C-beta, releasing diacylglycerol (DAG) and inositol 1,4,5-trisphosphate (IP3) second messengers, while G(i)/G(o) coupling mediates inhibition of adenylate cyclase activity. The G-protein-coupled receptor activity is activated by a co-agonist mechanism: aromatic amino acids, such as Trp or Phe, act concertedly with divalent cations, such as calcium or magnesium, to achieve full receptor activation. Acts as an activator of the NLRP3 inflammasome via G(i)/G(o)-mediated signaling: down-regulation of cyclic AMP (cAMP) relieving NLRP3 inhibition by cAMP. Acts as a regulator of proton-sensing receptor GPR68 in a seesaw manner: CASR-mediated signaling inhibits GPR68 signaling in response to extracellular calcium, while GPR68 inhibits CASR in presence of extracellular protons. The sequence is that of Extracellular calcium-sensing receptor from Homo sapiens (Human).